The chain runs to 351 residues: Tropomodulin-2 (351 aa).

S25 carries the post-translational modification Phosphoserine.

It belongs to the tropomodulin family. In terms of assembly, binds to the N-terminus of tropomyosin and to actin. Neuronal-tissue specific.

It localises to the cytoplasm. The protein localises to the cytoskeleton. In terms of biological role, blocks the elongation and depolymerization of the actin filaments at the pointed end. The Tmod/TM complex contributes to the formation of the short actin protofilament, which in turn defines the geometry of the membrane skeleton. This Homo sapiens (Human) protein is Tropomodulin-2 (TMOD2).